The primary structure comprises 453 residues: Plasticin (453 aa).

The segment at 1–51 (MSHSTFSHLFSPHFGAPVYSPVSSRIGGRYVSSSVPTRSVDFRSRSSAPAP) is head. The interval 71-112 (FATRSNEKRELQELNDRFASFIEKVRHLEQQNSKLILELGQY) is coil 1A. An IF rod domain is found at 77–390 (EKRELQELND…KLLEGEENRI (314 aa)). The tract at residues 113-126 (KDQHQGSTGRINEL) is linker 1. Residues 127-222 (CQQEMRELRR…KMHDEEIQDV (96 aa)) form a coil 1B region. The linker 12 stretch occupies residues 223-245 (QVSVQSQQMKMEVMETSSRPDLT). The interval 246–391 (GALRDIRAQY…LLEGEENRIV (146 aa)) is coil 2. Residues 392–453 (VPIMKMPSMS…KKDSHGQGKD (62 aa)) form a tail region. A disordered region spans residues 421–453 (IKTVETRDGEVVKESTKEKGRDEKKDSHGQGKD). Residues 424-453 (VETRDGEVVKESTKEKGRDEKKDSHGQGKD) show a composition bias toward basic and acidic residues.

This sequence belongs to the intermediate filament family. As to expression, optic nerve.

Type III neurofilament. The chain is Plasticin from Carassius auratus (Goldfish).